Here is a 236-residue protein sequence, read N- to C-terminus: 7-cyano-7-deazaguanine synthase (236 aa).

Position 7–17 (7–17 (CSGGLDSVTLA)) interacts with ATP. 4 residues coordinate Zn(2+): Cys185, Cys193, Cys196, and Cys199.

It belongs to the QueC family. It depends on Zn(2+) as a cofactor.

The enzyme catalyses 7-carboxy-7-deazaguanine + NH4(+) + ATP = 7-cyano-7-deazaguanine + ADP + phosphate + H2O + H(+). Its pathway is purine metabolism; 7-cyano-7-deazaguanine biosynthesis. In terms of biological role, catalyzes the ATP-dependent conversion of 7-carboxy-7-deazaguanine (CDG) to 7-cyano-7-deazaguanine (preQ(0)). This chain is 7-cyano-7-deazaguanine synthase, found in Rhizobium johnstonii (strain DSM 114642 / LMG 32736 / 3841) (Rhizobium leguminosarum bv. viciae).